The chain runs to 235 residues: Large ribosomal subunit protein uL1 (235 aa).

Belongs to the universal ribosomal protein uL1 family. Part of the 50S ribosomal subunit.

Binds directly to 23S rRNA. The L1 stalk is quite mobile in the ribosome, and is involved in E site tRNA release. Functionally, protein L1 is also a translational repressor protein, it controls the translation of the L11 operon by binding to its mRNA. This Desulfovibrio desulfuricans (strain ATCC 27774 / DSM 6949 / MB) protein is Large ribosomal subunit protein uL1.